The sequence spans 350 residues: Aldo-keto reductase 1B (350 aa).

Tyr84 (proton donor) is an active-site residue. Residue His146 participates in substrate binding. Position 244 to 306 (244 to 306 (SPLGSPNRPW…SVTKDRIESN (63 aa))) interacts with NADP(+).

It belongs to the aldo/keto reductase family.

The protein localises to the cytoplasm. It catalyses the reaction an alditol + NADP(+) = an aldose + NADPH + H(+). It carries out the reaction all-trans-retinol + NADP(+) = all-trans-retinal + NADPH + H(+). The enzyme catalyses 9-cis-retinol + NADP(+) = 9-cis-retinal + NADPH + H(+). The catalysed reaction is 13-cis-retinol + NADP(+) = 13-cis-retinal + NADPH + H(+). It catalyses the reaction glycerol + NADP(+) = D-glyceraldehyde + NADPH + H(+). It carries out the reaction glycerol + NADP(+) = L-glyceraldehyde + NADPH + H(+). The enzyme catalyses prenol + NADP(+) = 3-methyl-2-butenal + NADPH + H(+). The catalysed reaction is (E)-hex-2-en-1-ol + NADP(+) = (E)-hex-2-enal + NADPH + H(+). It catalyses the reaction (E,E)-2,4-hexadien-1-ol + NADP(+) = (E,E)-2,4-hexadienal + NADPH + H(+). It carries out the reaction a 4-hydroxynonen-1-ol + NADP(+) = a 4-hydroxynonenal + NADPH + H(+). The enzyme catalyses prostaglandin F2alpha + NADP(+) = prostaglandin H2 + NADPH + H(+). The catalysed reaction is allyl alcohol + NADP(+) = acrolein + NADPH + H(+). It catalyses the reaction pyridine 3-methanol + NADP(+) = pyridine-3-carbaldehyde + NADPH + H(+). It carries out the reaction 1-hexadecanoyl-2-(5-oxopentanoyl)-sn-glycero-3-phosphocholine + NADPH + H(+) = 1-hexadecanoyl-2-(5-hydroxypentanoyl)-sn-glycero-3-phosphocholine + NADP(+). The enzyme catalyses 1-hexadecanoyl-2-(7-oxoheptanoyl)-sn-glycero-3-phosphocholine + NADPH + H(+) = 1-hexadecanoyl-2-(7-hydroxyheptanoyl)-sn-glycero-3-phosphocholine + NADP(+). The catalysed reaction is 1-hexadecanoyl-2-(9-oxononanoyl)-sn-glycero-3-phosphocholine + NADPH + H(+) = 1-hexadecanoyl-2-(9-hydroxynonanoyl)-sn-glycero-3-phosphocholine + NADP(+). It catalyses the reaction 1-hexadecanoyl-2-(5-oxopentanoyl)-sn-glycero-3-phosphoethanolamine + NADPH + H(+) = 1-hexadecanoyl-2-(5-hydroxypentanoyl)-sn-glycero-3-phosphoethanolamine + NADP(+). Its function is as follows. Catalyzes the NADPH-dependent reduction of a wide variety of carbonyl-containing compounds to their corresponding alcohols. Displays enzymatic activity towards endogenous metabolites such as aromatic and aliphatic aldehydes, ketones, monosaccharides, bile acids and xenobiotics substrates. Key enzyme in the polyol pathway, catalyzes reduction of glucose to sorbitol during hyperglycemia. Reduces steroids and their derivatives and prostaglandins. Through production of prostaglandin F2alpha may regulate the activity of non-muscle myosin II in an autocrine or paracrine fashion; influences border cell and nurse cell stiffness to facilitate border cell cluster migration. Also regulates the cell surface localization of integrins in an autocrine or paracrine fashion; influences border cell adhesion to maintain border cell cluster morphology. In hemocytes, probably contributes to production of sugar alcohols in the hemolymph, which act as alarmins involved in gut-fat body innate immunological communication (GFIC); leads to activation of the imd/Relish signaling pathway in the fat body. This Drosophila melanogaster (Fruit fly) protein is Aldo-keto reductase 1B.